The primary structure comprises 57 residues: Large ribosomal subunit protein bL32 (57 aa).

The protein belongs to the bacterial ribosomal protein bL32 family.

This Streptomyces griseus subsp. griseus (strain JCM 4626 / CBS 651.72 / NBRC 13350 / KCC S-0626 / ISP 5235) protein is Large ribosomal subunit protein bL32.